The following is a 278-amino-acid chain: Large ribosomal subunit protein uL2 (278 aa).

Disordered regions lie at residues 1 to 20, 25 to 57, and 224 to 278; these read MAIRKYKPTTPGRRGSSVSD, TRSTPEKSLLRPLTKSGGRNAHGRITTRHRGGG, and VVMN…GKKR. Composition is skewed to basic residues over residues 45 to 57 and 269 to 278; these read AHGRITTRHRGGG and VRRRKTGKKR.

It belongs to the universal ribosomal protein uL2 family. In terms of assembly, part of the 50S ribosomal subunit. Forms a bridge to the 30S subunit in the 70S ribosome.

One of the primary rRNA binding proteins. Required for association of the 30S and 50S subunits to form the 70S ribosome, for tRNA binding and peptide bond formation. It has been suggested to have peptidyltransferase activity; this is somewhat controversial. Makes several contacts with the 16S rRNA in the 70S ribosome. This Nocardia farcinica (strain IFM 10152) protein is Large ribosomal subunit protein uL2.